A 427-amino-acid chain; its full sequence is Serine--tRNA ligase (427 aa).

An L-serine-binding site is contributed by 231-233; the sequence is TAE. Residue 262 to 264 participates in ATP binding; it reads RSE. An L-serine-binding site is contributed by E285. 349 to 352 is a binding site for ATP; that stretch reads EISS. S385 lines the L-serine pocket.

It belongs to the class-II aminoacyl-tRNA synthetase family. Type-1 seryl-tRNA synthetase subfamily. As to quaternary structure, homodimer. The tRNA molecule binds across the dimer.

It localises to the cytoplasm. It catalyses the reaction tRNA(Ser) + L-serine + ATP = L-seryl-tRNA(Ser) + AMP + diphosphate + H(+). The enzyme catalyses tRNA(Sec) + L-serine + ATP = L-seryl-tRNA(Sec) + AMP + diphosphate + H(+). Its pathway is aminoacyl-tRNA biosynthesis; selenocysteinyl-tRNA(Sec) biosynthesis; L-seryl-tRNA(Sec) from L-serine and tRNA(Sec): step 1/1. Functionally, catalyzes the attachment of serine to tRNA(Ser). Is also able to aminoacylate tRNA(Sec) with serine, to form the misacylated tRNA L-seryl-tRNA(Sec), which will be further converted into selenocysteinyl-tRNA(Sec). The sequence is that of Serine--tRNA ligase from Rhizobium etli (strain CIAT 652).